A 316-amino-acid chain; its full sequence is N-acetylmuramic acid 6-phosphate etherase (316 aa).

The disordered stretch occupies residues 1 to 25 (MAVFDPDLQPSSDRGHLLTEQSNQR). The region spanning 66–229 (VANRLRAGGR…STAVMVKLGK (164 aa)) is the SIS domain. Glutamate 94 acts as the Proton donor in catalysis. Residue glutamate 125 is part of the active site.

It belongs to the GCKR-like family. MurNAc-6-P etherase subfamily. In terms of assembly, homodimer.

The catalysed reaction is N-acetyl-D-muramate 6-phosphate + H2O = N-acetyl-D-glucosamine 6-phosphate + (R)-lactate. Its pathway is amino-sugar metabolism; N-acetylmuramate degradation. In terms of biological role, specifically catalyzes the cleavage of the D-lactyl ether substituent of MurNAc 6-phosphate, producing GlcNAc 6-phosphate and D-lactate. The chain is N-acetylmuramic acid 6-phosphate etherase from Synechococcus sp. (strain CC9605).